We begin with the raw amino-acid sequence, 68 residues long: Negative regulatory protein YxlD (68 aa).

Helical transmembrane passes span 5–25 (EIII…FLFI) and 37–57 (WGIV…FFVI).

The protein localises to the cell membrane. Functionally, together with YxlE, is important for negative regulation of sigma Y activity, being the major negative regulator. This Bacillus subtilis (strain 168) protein is Negative regulatory protein YxlD (yxlD).